Reading from the N-terminus, the 309-residue chain is Homoserine O-succinyltransferase (309 aa).

The active-site Acyl-thioester intermediate is C142. Substrate-binding residues include K163 and S192. Catalysis depends on H235, which acts as the Proton acceptor. E237 is a catalytic residue. Substrate is bound at residue R249.

The protein belongs to the MetA family.

The protein localises to the cytoplasm. It catalyses the reaction L-homoserine + succinyl-CoA = O-succinyl-L-homoserine + CoA. It functions in the pathway amino-acid biosynthesis; L-methionine biosynthesis via de novo pathway; O-succinyl-L-homoserine from L-homoserine: step 1/1. Transfers a succinyl group from succinyl-CoA to L-homoserine, forming succinyl-L-homoserine. In Serratia proteamaculans (strain 568), this protein is Homoserine O-succinyltransferase.